The primary structure comprises 202 residues: uncharacterized protein (202 aa).

Positions 1 to 19 (MRRKNGFSVASVFILCSIA) are cleaved as a signal peptide. Residues 177–199 (FLASSSSSFSSFLPSIAIILFFV) traverse the membrane as a helical segment.

It is found in the membrane. This is an uncharacterized protein from Caenorhabditis elegans.